Here is an 84-residue protein sequence, read N- to C-terminus: Small ribosomal subunit protein uS17 (84 aa).

It belongs to the universal ribosomal protein uS17 family. As to quaternary structure, part of the 30S ribosomal subunit.

Functionally, one of the primary rRNA binding proteins, it binds specifically to the 5'-end of 16S ribosomal RNA. This is Small ribosomal subunit protein uS17 from Borrelia hermsii (strain HS1 / DAH).